The following is a 156-amino-acid chain: Putative pre-16S rRNA nuclease (156 aa).

Belongs to the YqgF nuclease family.

It localises to the cytoplasm. Could be a nuclease involved in processing of the 5'-end of pre-16S rRNA. The polypeptide is Putative pre-16S rRNA nuclease (Bartonella tribocorum (strain CIP 105476 / IBS 506)).